We begin with the raw amino-acid sequence, 96 residues long: Co-chaperonin GroES (96 aa).

This sequence belongs to the GroES chaperonin family. Heptamer of 7 subunits arranged in a ring. Interacts with the chaperonin GroEL.

The protein localises to the cytoplasm. Functionally, together with the chaperonin GroEL, plays an essential role in assisting protein folding. The GroEL-GroES system forms a nano-cage that allows encapsulation of the non-native substrate proteins and provides a physical environment optimized to promote and accelerate protein folding. GroES binds to the apical surface of the GroEL ring, thereby capping the opening of the GroEL channel. This chain is Co-chaperonin GroES, found in Hydrogenobaculum sp. (strain Y04AAS1).